The following is a 211-amino-acid chain: Small ribosomal subunit protein uS3 (211 aa).

In terms of domain architecture, KH type-2 spans 38–106; sequence LRSFVKKTFH…EVELHIVEVK (69 aa).

It belongs to the universal ribosomal protein uS3 family. As to quaternary structure, part of the 30S ribosomal subunit. Forms a tight complex with proteins S10 and S14.

In terms of biological role, binds the lower part of the 30S subunit head. Binds mRNA in the 70S ribosome, positioning it for translation. The protein is Small ribosomal subunit protein uS3 of Anaplasma phagocytophilum (strain HZ).